The sequence spans 182 residues: UPF0301 protein MCA0413 1 (182 aa).

It belongs to the UPF0301 (AlgH) family.

The protein is UPF0301 protein MCA0413 1 of Methylococcus capsulatus (strain ATCC 33009 / NCIMB 11132 / Bath).